We begin with the raw amino-acid sequence, 43 residues long: Protein PsbN (43 aa).

Residues 5 to 27 traverse the membrane as a helical segment; the sequence is TLVTIFISGSLVSFTGYALYTAF.

Belongs to the PsbN family.

The protein resides in the plastid. The protein localises to the chloroplast thylakoid membrane. May play a role in photosystem I and II biogenesis. The polypeptide is Protein PsbN (Piper cenocladum (Ant piper)).